Here is a 648-residue protein sequence, read N- to C-terminus: PTS system N-acetylglucosamine-specific EIICBA component (648 aa).

Residue Met1 is modified to N-formylmethionine. Residues 1–371 enclose the PTS EIIC type-1 domain; sequence MNILGFFQRL…FNLKTPGRED (371 aa). The next 12 membrane-spanning stretches (helical) occupy residues 16 to 36, 38 to 58, 70 to 90, 92 to 112, 132 to 152, 159 to 179, 192 to 212, 232 to 252, 260 to 280, 282 to 302, 303 to 323, and 339 to 359; these read LPIAVLPVAALLLRFGQPDLL, VAFIAQAGGAIFDNLALIFAI, GAAALAGAVGYFVLTKAMVTI, PEINMGVLAGIITGLVGGAAY, FVPIATGFFCLVLAAIFGYVW, IHAGGEWIVSAGALGSGIFGF, VLNTIAWFQIGEFTNAAGTVF, GFFPIMMFGLPGAALAMYFAA, VGGMLLSVAVTAFLTGVTEPL, FLFMFLAPLLYLLHALLTGIS, LFVATLLGIHAGFSFSAGAID, and MLLVMGVIFFAIYFVVFSLVI. One can recognise a PTS EIIB type-1 domain in the interval 390–472; sequence TQLATNYIAA…KKVVARGPVA (83 aa). Residue Cys412 is the Phosphocysteine intermediate; for EIIB activity of the active site. A Phosphocysteine; by EIIA modification is found at Cys412. Residues 517–621 enclose the PTS EIIA type-1 domain; it reads DEAFASKAVG…SMISPVVCSN (105 aa). Residues His554 and His569 each contribute to the Zn(2+) site. His569 acts as the Tele-phosphohistidine intermediate; for EIIA activity in catalysis. His569 is subject to Phosphohistidine; by HPr.

Zn(2+) serves as cofactor. In terms of processing, 60% of isolated protein was N-formylated.

Its subcellular location is the cell inner membrane. It carries out the reaction N(pros)-phospho-L-histidyl-[protein] + N-acetyl-D-glucosamine(out) = N-acetyl-D-glucosamine 6-phosphate(in) + L-histidyl-[protein]. Its activity is regulated as follows. P-chloromercuribenzoate inhibits the accumulation of both N-acetyl-D-glucosamine and antibiotic streptozotocin (2-deoxy-2-(3-methyl-3-nitrosoureido)-D-glucopyranose). N-acetyl-D-glucosamine is a competitive inhibitor for the uptake of streptozotocin. In terms of biological role, the phosphoenolpyruvate-dependent sugar phosphotransferase system (sugar PTS), a major carbohydrate active transport system, catalyzes the phosphorylation of incoming sugar substrates concomitantly with their translocation across the cell membrane. This system is involved in N-acetylglucosamine transport. It can also transport and phosphorylate the antibiotic streptozotocin. Could play a significant role in the recycling of peptidoglycan. The polypeptide is PTS system N-acetylglucosamine-specific EIICBA component (Escherichia coli (strain K12)).